The sequence spans 206 residues: MRPLTPRQAEILELIKRNIADTGMPPTRAEIARRLGFKSANAAEEHLKALAKKGCIEIMPGTSRGIKLTQENTEDADLGLPLIGQVAAGEPILAQEHVEQHYKVDPAMFKPSADFLLRVRGDSMKNIGILEGDLLAVHKIQQARNGQIVVARVEDDVTVKRFEKKGNKVFLHAENEEYSPIEVDLANQSLSIEGLAVGVIRNGDWQ.

Residues 28 to 48 constitute a DNA-binding region (H-T-H motif); the sequence is RAEIARRLGFKSANAAEEHLK. Catalysis depends on for autocatalytic cleavage activity residues serine 123 and lysine 160.

It belongs to the peptidase S24 family. Homodimer.

The enzyme catalyses Hydrolysis of Ala-|-Gly bond in repressor LexA.. Represses a number of genes involved in the response to DNA damage (SOS response), including recA and lexA. In the presence of single-stranded DNA, RecA interacts with LexA causing an autocatalytic cleavage which disrupts the DNA-binding part of LexA, leading to derepression of the SOS regulon and eventually DNA repair. The chain is LexA repressor from Shewanella halifaxensis (strain HAW-EB4).